Consider the following 276-residue polypeptide: 2-dehydro-3-deoxyphosphooctonate aldolase (276 aa).

The protein belongs to the KdsA family.

It is found in the cytoplasm. It carries out the reaction D-arabinose 5-phosphate + phosphoenolpyruvate + H2O = 3-deoxy-alpha-D-manno-2-octulosonate-8-phosphate + phosphate. It participates in carbohydrate biosynthesis; 3-deoxy-D-manno-octulosonate biosynthesis; 3-deoxy-D-manno-octulosonate from D-ribulose 5-phosphate: step 2/3. The protein operates within bacterial outer membrane biogenesis; lipopolysaccharide biosynthesis. This chain is 2-dehydro-3-deoxyphosphooctonate aldolase, found in Helicobacter acinonychis (strain Sheeba).